A 474-amino-acid polypeptide reads, in one-letter code: PRAME family member 7 (474 aa).

One copy of the LRR 1; degenerate repeat lies at 97–122 (QSKLQVLDLRNVDENFCDIFSGATAS). The LRR 2; degenerate repeat unit spans residues 177 to 201 (HVCCKELQVFGMPIHSIIEVLNMVE). One copy of the LRR 3; degenerate repeat lies at 202–228 (LDCIQEVEVCCPWELSTLVKFAPYLGQ). An LRR 4; degenerate repeat occupies 229–264 (MRNLRKLVLFNIRASACIPPDNKGQFIARFTSQFLK). 5 LRR repeats span residues 265-290 (LDYF…LRCL), 291-322 (QASL…RQLK), 323-341 (ELDL…PLTG), 347-374 (VATL…VLSR), and 375-399 (CSQL…LLRH).

This sequence belongs to the PRAME family.

In Homo sapiens (Human), this protein is PRAME family member 7.